Here is a 253-residue protein sequence, read N- to C-terminus: MAEPHEIDPIHQFHIDRIIPLHFLGTDVSFTNAAFFMLVIVALASLVLLAGTRNHSLVPGRLQSIAEVSYEFIASTLQLSSGRDGMRFFPFVFSIFMFVFLANLIGLVPYTFTVTSQIAVTFGLAMIVIGTVVIYGLIKHGTHFLGIFAPSGVSPLLLPFMIMIEVISFISRPISLSIRLFANMLAGHITLKVMGGFVAGLLGAGSVYALVAPLPLAMVVIFTAFELLVAFLQAYVFTILTCVYLNDAVHPGH.

6 helical membrane-spanning segments follow: residues 30–50 (FTNA…VLLA), 88–108 (FFPF…IGLV), 118–138 (IAVT…YGLI), 144–164 (FLGI…MIMI), 184–204 (MLAG…LLGA), and 211–231 (VAPL…LVAF).

The protein belongs to the ATPase A chain family. As to quaternary structure, F-type ATPases have 2 components, CF(1) - the catalytic core - and CF(0) - the membrane proton channel. CF(1) has five subunits: alpha(3), beta(3), gamma(1), delta(1), epsilon(1). CF(0) has three main subunits: a(1), b(2) and c(9-12). The alpha and beta chains form an alternating ring which encloses part of the gamma chain. CF(1) is attached to CF(0) by a central stalk formed by the gamma and epsilon chains, while a peripheral stalk is formed by the delta and b chains.

It localises to the cell inner membrane. In terms of biological role, key component of the proton channel; it plays a direct role in the translocation of protons across the membrane. This Beijerinckia indica subsp. indica (strain ATCC 9039 / DSM 1715 / NCIMB 8712) protein is ATP synthase subunit a.